The primary structure comprises 320 residues: Cytochrome f (320 aa).

Residues 1 to 35 (MKLNSLINLIQKSIYSCTLLLIILNIICVAPNSSN) form the signal peptide. Positions 37, 57, 60, and 61 each coordinate heme. The helical transmembrane segment at 286 to 306 (IKGMIVFFFASVLAQIFFVLK) threads the bilayer.

Belongs to the cytochrome f family. The 4 large subunits of the cytochrome b6-f complex are cytochrome b6, subunit IV (17 kDa polypeptide, petD), cytochrome f and the Rieske protein, while the 4 small subunits are PetG, PetL, PetM and PetN. The complex functions as a dimer. Heme serves as cofactor.

The protein localises to the plastid. It is found in the chloroplast thylakoid membrane. In terms of biological role, component of the cytochrome b6-f complex, which mediates electron transfer between photosystem II (PSII) and photosystem I (PSI), cyclic electron flow around PSI, and state transitions. This is Cytochrome f from Pyropia yezoensis (Susabi-nori).